Here is a 402-residue protein sequence, read N- to C-terminus: Plasminogen activator inhibitor 1 (402 aa).

Residues 1 to 23 (MRMSLVFACLAMGLALTFAEGSA) form the signal peptide. N-linked (GlcNAc...) asparagine glycosylation is found at Asn-232, Asn-288, and Asn-352.

This sequence belongs to the serpin family. As to quaternary structure, forms a heterodimer with TMPRSS7. Interacts with VTN. Binds LRP1B; binding is followed by internalization and degradation. Interacts with PPP1CB. In complex with PLAU/uPA, interacts with PLAUR/uPAR. Interacts with SORL1 and LRP1, either alone or in complex with PLAU; these interactions are abolished in the presence of LRPAP1/RAP. The ternary complex composed of PLAUR-PLAU-PAI1 also interacts with SORL1. Interacts with PLAT/tPA. Also interacts with SORL1, when complexed to PLAT/tPA.

It is found in the secreted. Functionally, serine protease inhibitor. Inhibits TMPRSS7. Is a primary inhibitor of tissue-type plasminogen activator (PLAT) and urokinase-type plasminogen activator (PLAU). As PLAT inhibitor, it is required for fibrinolysis down-regulation and is responsible for the controlled degradation of blood clots. As PLAU inhibitor, it is involved in the regulation of cell adhesion and spreading. Acts as a regulator of cell migration, independently of its role as protease inhibitor. It is required for stimulation of keratinocyte migration during cutaneous injury repair. It is involved in cellular and replicative senescence. Plays a role in alveolar type 2 cells senescence in the lung. Is involved in the regulation of cementogenic differentiation of periodontal ligament stem cells, and regulates odontoblast differentiation and dentin formation during odontogenesis. This chain is Plasminogen activator inhibitor 1 (SERPINE1), found in Sus scrofa (Pig).